The primary structure comprises 635 residues: Sodium-dependent multivitamin transporter (635 aa).

The next 3 membrane-spanning stretches (helical) occupy residues Phe24–Leu44, Cys68–Val88, and Phe101–Phe121. A glycan (N-linked (GlcNAc...) asparagine) is linked at Asn138. The next 9 helical transmembrane spans lie at Val143 to Ala163, Leu176 to Leu196, Val199 to Ile219, Phe256 to Ala276, Val297 to Ala317, Phe336 to Ile356, Ile396 to Ile416, Ile428 to Phe448, and Ala456 to Val476. N-linked (GlcNAc...) asparagine glycosylation is found at Asn489 and Asn498. The chain crosses the membrane as a helical span at residues Leu528–Leu548.

The protein belongs to the sodium:solute symporter (SSF) (TC 2.A.21) family. As to quaternary structure, interacts with PDZD11. In terms of processing, may be glycosylated. As to expression, expressed in microvessels of the brain (at protein level). Expressed in heart, brain, placenta, lung, liver, skeletal muscle, kidney, and pancreas.

Its subcellular location is the cell membrane. It is found in the apical cell membrane. The catalysed reaction is biotin(out) + 2 Na(+)(out) = biotin(in) + 2 Na(+)(in). The enzyme catalyses (R)-pantothenate(out) + 2 Na(+)(out) = (R)-pantothenate(in) + 2 Na(+)(in). It carries out the reaction (R)-lipoate(out) + 2 Na(+)(out) = (R)-lipoate(in) + 2 Na(+)(in). It catalyses the reaction iodide(out) + 2 Na(+)(out) = iodide(in) + 2 Na(+)(in). Its function is as follows. Sodium-dependent multivitamin transporter that mediates the electrogenic transport of pantothenate, biotin, lipoate and iodide. Functions as a Na(+)-coupled substrate symporter where the stoichiometry of Na(+):substrate is 2:1, creating an electrochemical Na(+) gradient used as driving force for substrate uptake. Required for biotin and pantothenate uptake in the intestine across the brush border membrane. Plays a role in the maintenance of intestinal mucosa integrity, by providing the gut mucosa with biotin. Contributes to the luminal uptake of biotin and pantothenate into the brain across the blood-brain barrier. In Homo sapiens (Human), this protein is Sodium-dependent multivitamin transporter.